Consider the following 141-residue polypeptide: Hemoglobin subunit alpha-D (141 aa).

In terms of domain architecture, Globin spans Met-1–Arg-141. Heme b contacts are provided by His-58 and His-87.

Heterotetramer of two alpha-D chains and two beta chains. As to expression, red blood cells.

Involved in oxygen transport from the lung to the various peripheral tissues. The protein is Hemoglobin subunit alpha-D (HBAD) of Aythya fuligula (Tufted duck).